Consider the following 376-residue polypeptide: Alpha-centractin (376 aa).

An N-acetylmethionine modification is found at Met-1.

This sequence belongs to the actin family. ARP1 subfamily. Part of the ACTR1A/ACTB filament around which the dynactin complex is built. The filament contains 8 copies of ACTR1A and 1 ACTB. Interacts with dynein and adapters such as BICD2. Interacts with BCCIP (isoform 2/alpha).

It localises to the cytoplasm. Its subcellular location is the cytoskeleton. The protein resides in the microtubule organizing center. It is found in the centrosome. The protein localises to the cell cortex. In terms of biological role, part of the ACTR1A/ACTB filament around which the dynactin complex is built. The dynactin multiprotein complex activates the molecular motor dynein for ultra-processive transport along microtubules. The protein is Alpha-centractin (ACTR1A) of Canis lupus familiaris (Dog).